Consider the following 394-residue polypeptide: Phosphopentomutase (394 aa).

Positions 13, 286, 291, 327, 328, and 339 each coordinate Mn(2+).

Belongs to the phosphopentomutase family. Mn(2+) serves as cofactor.

It is found in the cytoplasm. The enzyme catalyses 2-deoxy-alpha-D-ribose 1-phosphate = 2-deoxy-D-ribose 5-phosphate. It carries out the reaction alpha-D-ribose 1-phosphate = D-ribose 5-phosphate. It participates in carbohydrate degradation; 2-deoxy-D-ribose 1-phosphate degradation; D-glyceraldehyde 3-phosphate and acetaldehyde from 2-deoxy-alpha-D-ribose 1-phosphate: step 1/2. Its function is as follows. Isomerase that catalyzes the conversion of deoxy-ribose 1-phosphate (dRib-1-P) and ribose 1-phosphate (Rib-1-P) to deoxy-ribose 5-phosphate (dRib-5-P) and ribose 5-phosphate (Rib-5-P), respectively. The protein is Phosphopentomutase of Bacillus anthracis (strain A0248).